Consider the following 530-residue polypeptide: Netrin-G2 (530 aa).

A signal peptide spans 1–17 (MLHLLALFLHCLPLASG). 3 disulfides stabilise this stretch: C22/C39, C61/C81, and C69/C77. Positions 35 to 286 (EFYACQPKVM…AISNIEVIGR (252 aa)) constitute a Laminin N-terminal domain. Residues 69–88 (CSHENPYLCSNECDASNPDL) form an NGL discriminant loop I region. N-linked (GlcNAc...) asparagine glycosylation is found at N122 and N128. A disulfide bridge links C171 with C195. Positions 201-203 (RWA) are NGL discriminant loop II. Residues 264–267 (TYVQ) form an NGL discriminant loop III region. 15 disulfides stabilise this stretch: C287–C296, C289–C305, C307–C316, C319–C344, C353–C362, C355–C373, C376–C385, C388–C406, C409–C421, C411–C427, C429–C438, C441–C451, C456–C469, C463–C475, and C477–C486. 3 consecutive Laminin EGF-like domains span residues 287–346 (CKCN…ACAT), 353–408 (CECY…VCIE), and 409–453 (CNCN…GCYP). N310 carries N-linked (GlcNAc...) asparagine glycosylation. N-linked (GlcNAc...) asparagine glycosylation is present at N395. A glycan (N-linked (GlcNAc...) asparagine) is linked at N422. The GPI-anchor amidated glycine moiety is linked to residue G507. The propeptide at 508 to 530 (AAPRPATLLGCLLLLGLAARLGR) is removed in mature form.

Interacts with LRRC4. Post-translationally, N-glycosylated.

The protein localises to the cell membrane. In terms of biological role, involved in controlling patterning and neuronal circuit formation at the laminar, cellular, subcellular and synaptic levels. Promotes neurite outgrowth of both axons and dendrites. The chain is Netrin-G2 from Homo sapiens (Human).